The chain runs to 860 residues: Leucine--tRNA ligase (860 aa).

Residues 42-52 carry the 'HIGH' region motif; sequence PYPSGRLHMGH. The short motif at 619–623 is the 'KMSKS' region element; it reads KMSKS. Lys-622 lines the ATP pocket.

The protein belongs to the class-I aminoacyl-tRNA synthetase family.

The protein localises to the cytoplasm. It carries out the reaction tRNA(Leu) + L-leucine + ATP = L-leucyl-tRNA(Leu) + AMP + diphosphate. This is Leucine--tRNA ligase from Pasteurella multocida (strain Pm70).